A 526-amino-acid chain; its full sequence is Glucose-6-phosphate isomerase (526 aa).

Residue Glu-347 is the Proton donor of the active site. Residues His-378 and Lys-493 contribute to the active site.

Belongs to the GPI family.

It is found in the cytoplasm. The catalysed reaction is alpha-D-glucose 6-phosphate = beta-D-fructose 6-phosphate. Its pathway is carbohydrate biosynthesis; gluconeogenesis. It participates in carbohydrate degradation; glycolysis; D-glyceraldehyde 3-phosphate and glycerone phosphate from D-glucose: step 2/4. Catalyzes the reversible isomerization of glucose-6-phosphate to fructose-6-phosphate. This is Glucose-6-phosphate isomerase from Chlamydia pneumoniae (Chlamydophila pneumoniae).